A 654-amino-acid chain; its full sequence is Fructose-1,6-bisphosphatase class 3 (654 aa).

This sequence belongs to the FBPase class 3 family. Mn(2+) serves as cofactor.

It catalyses the reaction beta-D-fructose 1,6-bisphosphate + H2O = beta-D-fructose 6-phosphate + phosphate. It participates in carbohydrate biosynthesis; gluconeogenesis. The polypeptide is Fructose-1,6-bisphosphatase class 3 (Staphylococcus epidermidis (strain ATCC 35984 / DSM 28319 / BCRC 17069 / CCUG 31568 / BM 3577 / RP62A)).